A 256-amino-acid chain; its full sequence is ATP synthase peripheral stalk subunit b, mitochondrial (256 aa).

The N-terminal 42 residues, 1–42 (MLSRVVLSAAATAAPCLKNAAVLGPGVLQATRVFHTGQPRLA), are a transit peptide targeting the mitochondrion. The residue at position 131 (lysine 131) is an N6-succinyllysine. Residues lysine 139, lysine 154, lysine 162, lysine 221, lysine 233, and lysine 244 each carry the N6-acetyllysine modification.

Belongs to the eukaryotic ATPase B chain family. Component of the ATP synthase complex composed at least of ATP5F1A/subunit alpha, ATP5F1B/subunit beta, ATP5MC1/subunit c (homooctomer), MT-ATP6/subunit a, MT-ATP8/subunit 8, ATP5ME/subunit e, ATP5MF/subunit f, ATP5MG/subunit g, ATP5MK/subunit k, ATP5MJ/subunit j, ATP5F1C/subunit gamma, ATP5F1D/subunit delta, ATP5F1E/subunit epsilon, ATP5PF/subunit F6, ATP5PB/subunit b, ATP5PD/subunit d, ATP5PO/subunit OSCP. ATP synthase complex consists of a soluble F(1) head domain (subunits alpha(3) and beta(3)) - the catalytic core - and a membrane F(0) domain - the membrane proton channel (subunits c, a, 8, e, f, g, k and j). These two domains are linked by a central stalk (subunits gamma, delta, and epsilon) rotating inside the F1 region and a stationary peripheral stalk (subunits F6, b, d, and OSCP).

The protein resides in the mitochondrion. It localises to the mitochondrion inner membrane. Functionally, subunit b, of the mitochondrial membrane ATP synthase complex (F(1)F(0) ATP synthase or Complex V) that produces ATP from ADP in the presence of a proton gradient across the membrane which is generated by electron transport complexes of the respiratory chain. ATP synthase complex consist of a soluble F(1) head domain - the catalytic core - and a membrane F(1) domain - the membrane proton channel. These two domains are linked by a central stalk rotating inside the F(1) region and a stationary peripheral stalk. During catalysis, ATP synthesis in the catalytic domain of F(1) is coupled via a rotary mechanism of the central stalk subunits to proton translocation. In vivo, can only synthesize ATP although its ATP hydrolase activity can be activated artificially in vitro. Part of the complex F(0) domain. Part of the complex F(0) domain and the peripheric stalk, which acts as a stator to hold the catalytic alpha(3)beta(3) subcomplex and subunit a/ATP6 static relative to the rotary elements. The sequence is that of ATP synthase peripheral stalk subunit b, mitochondrial from Rattus norvegicus (Rat).